The following is a 435-amino-acid chain: MHDIRVIRDNPAAFDAGLRRRGLEPLAAELVALDDARKAAISAAQVAQERRNALSKEIGAAKKARDEERARALMAEVARLKEQAPGLDAAADAAARALDARLAAIPNTPGPEVPEGRDEHDNVELRRFEGRGRAESGRQHFELGEAAGLMDFEAAARLSGSRFVVLKGRLARLERALGQFMLDLHTAEHGYTEVAPPLLVRDEAMFGTAQLPKFRDDQFAAQPGAVEPGAPGRWLIPTAEVPLTNLVRESILSEDELPLRFTALTPCFRAEAGAAGRDTRGMLRQHQFTKVELVSITAPEQSAEEHERMLACAEAVLRRLDLPYRVMTLCTGDMGFASQKTYDIEVWLPGQGTYREISSCSVCGDFQARRMEARFRRREDRGLGYVHSLNGSGVAVGRALIAVMENYQNPDGSVTVPSALAPYMGGVTRIEGPHA.

Thr-238–Glu-240 is a binding site for L-serine. Residue Arg-269 to Glu-271 coordinates ATP. Glu-292 provides a ligand contact to L-serine. Residue Glu-356–Ser-359 coordinates ATP. Ser-392 serves as a coordination point for L-serine.

The protein belongs to the class-II aminoacyl-tRNA synthetase family. Type-1 seryl-tRNA synthetase subfamily. Homodimer. The tRNA molecule binds across the dimer.

Its subcellular location is the cytoplasm. The enzyme catalyses tRNA(Ser) + L-serine + ATP = L-seryl-tRNA(Ser) + AMP + diphosphate + H(+). It carries out the reaction tRNA(Sec) + L-serine + ATP = L-seryl-tRNA(Sec) + AMP + diphosphate + H(+). It participates in aminoacyl-tRNA biosynthesis; selenocysteinyl-tRNA(Sec) biosynthesis; L-seryl-tRNA(Sec) from L-serine and tRNA(Sec): step 1/1. Its function is as follows. Catalyzes the attachment of serine to tRNA(Ser). Is also able to aminoacylate tRNA(Sec) with serine, to form the misacylated tRNA L-seryl-tRNA(Sec), which will be further converted into selenocysteinyl-tRNA(Sec). The polypeptide is Serine--tRNA ligase (Methylobacterium sp. (strain 4-46)).